We begin with the raw amino-acid sequence, 1364 residues long: Toxin subunit YenA2 (1364 aa).

Positions 1025 to 1080 (SESYRRRRQEWELQYKQAEWEVNSVEQQINLQNMQIKAANKRLEQVEAQQQQAMAL) form a coiled coil.

In terms of assembly, semipurified toxin complex consists of at least YenA1-YenA2-YenB-YenC1-YenC2-Chi1-Chi2. The Yen-TC:K9 subcomplex is about 26 nm tall and 22 nm in diameter with 5-fold symmetry and 5 copies of YenA1, YenA2, Chi1 and Chi2; the chitinase subunits may be solvent accessible on the exterior the complex. The Yen-TC:K9 subcomplex has no insecticidal activity. The native complex with additional YenB, YenC1 and YenC2 subunits is 16 nm taller and is insecticidal; the toxicity-conferring subunits are present at about 1 copy each. The isolated toxin complex includes 3 peptides starting between residues 768 and 778 of this protein, which might be physiologically relevant.

The protein localises to the secreted. Its function is as follows. Part of an orally active toxin complex (TC) with strong insecticidal effects on larvae of the Coleoptera Costelytra zealandica, Acrossidius tasmania and Adoryphorus couloni and some Lepidoptera larvae. The TC has an endochitinase activity. This chain is Toxin subunit YenA2, found in Yersinia entomophaga.